We begin with the raw amino-acid sequence, 874 residues long: Probable cation-transporting P-type ATPase (874 aa).

Topologically, residues 1-41 (MNSWTGLSEQAAIKSRQEHGANFLPEKKATPFWLLFLQQFK) are cytoplasmic. The chain crosses the membrane as a helical span at residues 42 to 62 (SLVVILLLLASLLSFVVAIVS). Topologically, residues 63 to 79 (GLRSNWNFNHDLIIEWV) are extracellular. The helical transmembrane segment at 80–100 (QPFIILLTVFANSLIGSIQEF) threads the bilayer. Residues 101–237 (KAQKSASALK…TKLSPLQQKL (137 aa)) lie on the Cytoplasmic side of the membrane. Residues 238-257 (EKIGKWFSWFGLGLFAVVFL) form a helical membrane-spanning segment. Residues 258–275 (VQTALLGFDNFTNNWSIA) lie on the Extracellular side of the membrane. Residues 276–293 (LIGAIALVVAIIPEGLVT) form a helical membrane-spanning segment. The Cytoplasmic segment spans residues 294 to 644 (FINVIFALSV…EEGRKTFLTC (351 aa)). The active-site 4-aspartylphosphate intermediate is the D331. The Mg(2+) site is built by D589 and D593. The chain crosses the membrane as a helical span at residues 645–664 (KRVLLNLFLTSIAGTVVVLL). At 665–687 (GLFILGQVFKTNLLQQGHDFQVF) the chain is on the extracellular side. The chain crosses the membrane as a helical span at residues 688 to 708 (SPTQLLIINLFVHGFPAVALA). Over 709–726 (VQPVKEKLMVGSFSTKNL) the chain is Cytoplasmic. The helical transmembrane segment at 727 to 749 (FYNRQGFDLIWQSLFLSFLTLLF) threads the bilayer. Residues 750-770 (YSLGIIYAINNRDLQTSGDLI) lie on the Extracellular side of the membrane. The chain crosses the membrane as a helical span at residues 771 to 790 (NRAGSTCGFFILGASAALNS). At 791–803 (LNLMVDKPLLMTN) the chain is on the cytoplasmic side. Residues 804–826 (PWFFKLVWIGSLASILVFLLIIF) form a helical membrane-spanning segment. Residues 827–844 (INPLGLVFNVLQDLTNHP) lie on the Extracellular side of the membrane. A helical membrane pass occupies residues 845 to 865 (VLISYSFGGVILYMGMNEVVK). Topologically, residues 866 to 874 (LIRLGYGNI) are cytoplasmic.

This sequence belongs to the cation transport ATPase (P-type) (TC 3.A.3) family. Type II subfamily.

It localises to the cell membrane. The catalysed reaction is ATP + H2O = ADP + phosphate + H(+). Could mediate calcium influx. This Mycoplasma genitalium (strain ATCC 33530 / DSM 19775 / NCTC 10195 / G37) (Mycoplasmoides genitalium) protein is Probable cation-transporting P-type ATPase (pacL).